The sequence spans 425 residues: UPF0597 protein VF_0641 (425 aa).

Belongs to the UPF0597 family.

In Aliivibrio fischeri (strain ATCC 700601 / ES114) (Vibrio fischeri), this protein is UPF0597 protein VF_0641.